The primary structure comprises 689 residues: DNA ligase (689 aa).

Residues 40–44 (DAEYD), 89–90 (SL), and Glu-121 each bind NAD(+). The N6-AMP-lysine intermediate role is filled by Lys-123. Positions 144, 179, 295, and 319 each coordinate NAD(+). Zn(2+) contacts are provided by Cys-413, Cys-416, Cys-431, and Cys-437. Positions 610–689 (REQSSLTGKI…AEWLTLVRDI (80 aa)) constitute a BRCT domain.

The protein belongs to the NAD-dependent DNA ligase family. LigA subfamily. Mg(2+) is required as a cofactor. It depends on Mn(2+) as a cofactor.

The enzyme catalyses NAD(+) + (deoxyribonucleotide)n-3'-hydroxyl + 5'-phospho-(deoxyribonucleotide)m = (deoxyribonucleotide)n+m + AMP + beta-nicotinamide D-nucleotide.. In terms of biological role, DNA ligase that catalyzes the formation of phosphodiester linkages between 5'-phosphoryl and 3'-hydroxyl groups in double-stranded DNA using NAD as a coenzyme and as the energy source for the reaction. It is essential for DNA replication and repair of damaged DNA. This Rickettsia bellii (strain OSU 85-389) protein is DNA ligase.